Consider the following 242-residue polypeptide: UPF0246 protein SP70585_1589 (242 aa).

This sequence belongs to the UPF0246 family.

The polypeptide is UPF0246 protein SP70585_1589 (Streptococcus pneumoniae (strain 70585)).